The chain runs to 155 residues: Ribosomal RNA large subunit methyltransferase H (155 aa).

S-adenosyl-L-methionine is bound by residues Leu-73, Gly-104, and 123–128 (LSPLTL).

This sequence belongs to the RNA methyltransferase RlmH family. In terms of assembly, homodimer.

It localises to the cytoplasm. The catalysed reaction is pseudouridine(1915) in 23S rRNA + S-adenosyl-L-methionine = N(3)-methylpseudouridine(1915) in 23S rRNA + S-adenosyl-L-homocysteine + H(+). In terms of biological role, specifically methylates the pseudouridine at position 1915 (m3Psi1915) in 23S rRNA. The chain is Ribosomal RNA large subunit methyltransferase H from Pseudomonas fluorescens (strain ATCC BAA-477 / NRRL B-23932 / Pf-5).